The primary structure comprises 675 residues: Collagen alpha-3(IX) chain (675 aa).

The first 21 residues, 1–21 (MTVFPTLGLLFLCQLLATTSA), serve as a signal peptide directing secretion. Disordered stretches follow at residues 22–517 (QRVG…KEAS) and 542–660 (KPLS…ICDT). Positions 25 to 515 (GPQGPPGPRG…TGKPGPPGKE (491 aa)) are triple-helical region 3 (COL3). 2 stretches are compositionally biased toward pro residues: residues 27–38 (QGPPGPRGPPGP) and 51–60 (SGLPGPPGPK). The segment covering 62-87 (APGKPGAAGEAGLPGLPGVDGLTGTD) has biased composition (low complexity). Residues 105–125 (AGPPGPAGKGLPGPPGPPGPS) are compositionally biased toward pro residues. A compositionally biased stretch (gly residues) spans 126 to 135 (GLPGGNGFRG). Pro residues-rich tracts occupy residues 136–155 (PPGPSGLPGFPGPPGPPGPP) and 173–184 (LCPPGPPGPPGM). Positions 218 to 233 (PGSVGLQGPRGLRGLP) are enriched in low complexity. Residues 242–244 (RGD) carry the Cell attachment site motif. Residues 301–317 (KDGRDGAPGLDGEKGDA) show a composition bias toward basic and acidic residues. The span at 361–374 (EPGIPGDVGIPGDR) shows a compositional bias: low complexity. An N-linked (GlcNAc...) asparagine glycan is attached at N479. Residues 481–508 (TAGAPGIPGHPGPMGHQGEQGVPGITGK) show a composition bias toward low complexity. Positions 516–546 (ASEQHIRELCGEMINDQIAQLAANLRKPLSP) are nonhelical region 3 (NC3). The interval 547–626 (GMTGRPGPAG…QGLPGVPGIS (80 aa)) is triple-helical region 2 (COL2). A compositionally biased stretch (low complexity) spans 569-582 (HPGARGPPGYRGPT). The Cell attachment site motif lies at 591–593 (RGD). Residues 613–624 (DQGPQGLPGVPG) show a composition bias toward low complexity. The interval 627–631 (KNGRD) is nonhelical region 2 (NC2). The triple-helical region 1 (COL1) stretch occupies residues 632 to 658 (GAQGEPGLPGDPGTPGAVGAQGTPGIC). The segment at 659 to 675 (DTSACMGAVGASTSKKS) is nonhelical region 1 (NC1).

The protein belongs to the fibril-associated collagens with interrupted helices (FACIT) family. Trimers composed of three different chains: alpha 1(IX), alpha 2(IX), and alpha 3(IX). In terms of processing, prolines at the third position of the tripeptide repeating unit (G-X-Y) are hydroxylated in some or all of the chains.

Its subcellular location is the secreted. It localises to the extracellular space. The protein resides in the extracellular matrix. Collagen type IX is a minor cartilage non-fibrillar collagen. It is associated with type II collagen fibrils. This is Collagen alpha-3(IX) chain (COL9A3) from Gallus gallus (Chicken).